The primary structure comprises 338 residues: Delta(9)-fatty-acid desaturase fat-7 (338 aa).

4 helical membrane passes run 51-71, 76-96, 194-214, and 218-238; these read VALF…LVFH, TAVF…AGAH, YFPL…VYFW, and AFIA…HATW.

Belongs to the fatty acid desaturase type 1 family. Expressed in the intestine in adult worms and in all four larval stages.

It is found in the membrane. The enzyme catalyses octadecanoyl-CoA + 2 Fe(II)-[cytochrome b5] + O2 + 2 H(+) = (9Z)-octadecenoyl-CoA + 2 Fe(III)-[cytochrome b5] + 2 H2O. The catalysed reaction is hexadecanoyl-CoA + 2 Fe(II)-[cytochrome b5] + O2 + 2 H(+) = (9Z)-hexadecenoyl-CoA + 2 Fe(III)-[cytochrome b5] + 2 H2O. It catalyses the reaction heptadecanoyl-CoA + 2 Fe(II)-[cytochrome b5] + O2 + 2 H(+) = (9Z)-heptadecenoyl-CoA + 2 Fe(III)-[cytochrome b5] + 2 H2O. It carries out the reaction (11E)-octadecenoyl-CoA + 2 Fe(II)-[cytochrome b5] + O2 + 2 H(+) = (9Z,11E)-octadecadienoyl-CoA + 2 Fe(III)-[cytochrome b5] + 2 H2O. The protein operates within lipid metabolism; monounsaturated fatty acid biosynthesis. It functions in the pathway lipid metabolism; fatty acid metabolism. Functionally, delta(9)-fatty acid desaturase that acts preferentially on stearoyl-CoA (octadecanoyl-CoA) producing the monounsaturated oleoyl-CoA ((9Z)-octadecenoyl-CoA), one of the most abundant monounsaturated fatty acid in Caenorhabditis elegans phospholipids and triacylglycerols. Also acts on palmitoyl-CoA (hexadecanoyl-CoA), heptadecanoyl-CoA and (11E)-octadecenoyl-CoA (trans-vaccenoyl-CoA), the monounsaturated fatty acids (MUFAs) produced are further used by several other desaturases and elongases as substrates to synthesize polyunsaturated fatty acids (PUFAs) endogenously (PUFAs are essential for membrane structure and many cellular and physiological processes). Unlike plants, Caenorhabditis elegans desaturases seem to use fatty acyl-CoAs as substrates. Partially inhibits expression of genes involved in beta-oxidation, such as ech-1 and acs-2, perhaps signaling via the actions of one of its fatty acid products. May form part of a negative feedback loop with the transcription factor nhr-49 to limit beta-oxidation, in which nhr-49 stimulates expression of fat-7 and acs-2, and in turn fat-7 indirectly inhibits acs-2 and other genes also involved in beta-oxidation. In Caenorhabditis elegans, this protein is Delta(9)-fatty-acid desaturase fat-7 (fat-7).